Consider the following 562-residue polypeptide: Sperm-tail PG-rich repeat-containing protein 2 (562 aa).

STPGR repeat units lie at residues 21 to 31 (GPGTYNINRSL), 60 to 73 (SPGPGQYNSDITRN), and 96 to 118 (PGPGAYNVTNDVSPARKIKAKSP). Disordered regions lie at residues 114 to 136 (KAKSPKITSKAVRPSLSPAAPSI) and 192 to 215 (SGRREPLKGADEPGPGHYELQEDQ). A compositionally biased stretch (low complexity) spans 127-136 (PSLSPAAPSI). A compositionally biased stretch (basic and acidic residues) spans 193–202 (GRREPLKGAD). 6 STPGR repeats span residues 204-227 (PGPGHYELQEDQTVQYENVNVKRE), 253-271 (PGPGQYYIKSQFETSSNTH), 336-350 (TPGPGAYNMFGYGLA), 385-409 (TPGPTQYKVEKTNEALYKKQSTAAF), 425-462 (TPPPGSYNVSQSFEKTQCLHQYSKPRNENARKRQSCFL), and 478-492 (TPGPAYYSPDVKSSS). The segment at 543–562 (STRSLSSHRSWRKPTAHSSA) is disordered. A compositionally biased stretch (basic residues) spans 551–562 (RSWRKPTAHSSA).

The sequence is that of Sperm-tail PG-rich repeat-containing protein 2 (stpg2) from Danio rerio (Zebrafish).